We begin with the raw amino-acid sequence, 982 residues long: Pentatricopeptide repeat-containing protein At5g62370 (982 aa).

PPR repeat units follow at residues 94 to 129, 130 to 164, 165 to 199, 200 to 234, 236 to 270, 271 to 305, 306 to 340, 341 to 376, 377 to 411, 412 to 446, 476 to 510, 511 to 545, 546 to 580, 581 to 615, 616 to 650, 651 to 685, 686 to 720, 721 to 755, 759 to 789, 793 to 827, 828 to 858, 860 to 894, 895 to 929, and 930 to 964; these read DSSCYGALIRKLTEMGQPGVAETFYNQRVIGNGIVP, DSSVLDSMVFCLVKLRRFDEARAHLDRIIASGYAP, SRNSSSLVVDELCNQDRFLEAFHCFEQVKERGSGL, WLWCCKRLFKGLCGHGHLNEAIGMLDTLCGMTRMP, PVNLYKSLFYCFCKRGCAAEAEALFDHMEVDGYYV, DKVMYTCLMKEYCKDNNMTMAMRLYLRMVERSFEL, DPCIFNTLIHGFMKLGMLDKGRVMFSQMIKKGVQS, NVFTYHIMIGSYCKEGNVDYALRLFVNNTGSEDISR, NVHCYTNLIFGFYKKGGMDKAVDLLMRMLDNGIVP, DHITYFVLLKMLPKCHELKYAMVILQSILDNGCGI, AAVGLAVVTTALCSQRNYIAALSRIEKMVNLGCTP, LPFSYNSVIKCLFQENIIEDLASLVNIIQELDFVP, DVDTYLIVVNELCKKNDRDAAFAIIDAMEELGLRP, TVAIYSSIIGSLGKQGRVVEAEETFAKMLESGIQP, DEIAYMIMINTYARNGRIDEANELVEEVVKHFLRP, SSFTYTVLISGFVKMGMMEKGCQYLDKMLEDGLSP, NVVLYTALIGHFLKKGDFKFSFTLFGLMGENDIKH, DHIAYITLLSGLWRAMARKKKRQVIVEPGKEKLLQ, RTKPLVSIPSSLGNYGSKSFAMEVIGKVKKS, NLYLHNTIITGYCAAGRLDEAYNHLESMQKEGIVP, NLVTYTILMKSHIEAGDIESAIDLFEGTNCE, DQVMYSTLLKGLCDFKRPLDALALMLEMQKSGINP, NKDSYEKLLQCLCYSRLTMEAVKVVKDMAALDIWP, and RSINHTWLIYILCEEKKLREARALFAIMVQSGRSL.

The protein belongs to the PPR family. P subfamily.

This chain is Pentatricopeptide repeat-containing protein At5g62370, found in Arabidopsis thaliana (Mouse-ear cress).